Consider the following 200-residue polypeptide: NAD(P)H dehydrogenase (quinone) (200 aa).

The Flavodoxin-like domain maps to 4–191; the sequence is VLVLYYSSYG…DIARYQGKHV (188 aa). FMN contacts are provided by residues 10–15 and 79–81; these read SSYGHV and TRF. An NAD(+)-binding site is contributed by Tyr12. Residue Trp99 participates in substrate binding. Residues 114 to 120 and His135 each bind FMN; that span reads STGTQHG.

It belongs to the WrbA family. FMN is required as a cofactor.

It catalyses the reaction a quinone + NADH + H(+) = a quinol + NAD(+). It carries out the reaction a quinone + NADPH + H(+) = a quinol + NADP(+). The sequence is that of NAD(P)H dehydrogenase (quinone) from Burkholderia ambifaria (strain MC40-6).